The sequence spans 161 residues: Cyclic pyranopterin monophosphate synthase (161 aa).

Residues 75–77 (LCH) and 113–114 (ME) contribute to the substrate site. Residue D128 is part of the active site.

The protein belongs to the MoaC family. Homohexamer; trimer of dimers.

It catalyses the reaction (8S)-3',8-cyclo-7,8-dihydroguanosine 5'-triphosphate = cyclic pyranopterin phosphate + diphosphate. It functions in the pathway cofactor biosynthesis; molybdopterin biosynthesis. In terms of biological role, catalyzes the conversion of (8S)-3',8-cyclo-7,8-dihydroguanosine 5'-triphosphate to cyclic pyranopterin monophosphate (cPMP). This Cronobacter sakazakii (strain ATCC BAA-894) (Enterobacter sakazakii) protein is Cyclic pyranopterin monophosphate synthase.